A 5541-amino-acid polypeptide reads, in one-letter code: Malpibaldin synthetase (5541 aa).

Positions 1–13 (MGDKRPDGIKSAE) are enriched in basic and acidic residues. The tract at residues 1–26 (MGDKRPDGIKSAESHGQPSAPFGAEN) is disordered. Positions 137 to 378 (KEDDIARDES…IDIISPAEKT (242 aa)) are condensation 1. Residues 401-799 (FEEQVDKSPD…GRNDDQVKIR (399 aa)) are adenylation 1. The Carrier 1 domain occupies 901-975 (VPCGETEDAI…VLAQDLSKHQ (75 aa)). Serine 936 carries the post-translational modification O-(pantetheine 4'-phosphoryl)serine. The tract at residues 1021 to 1469 (QDVYSLAPLQ…LPLDERTKLL (449 aa)) is dual epimerase/condensation (E/C) domain 1. Residues 1489-1899 (FEQQVKQSPI…GRNDDQIKIR (411 aa)) are adenylation 2. Residues 2001-2075 (SPQGRIECAL…SFAQAFKGQL (75 aa)) form the Carrier 2 domain. Serine 2036 bears the O-(pantetheine 4'-phosphoryl)serine mark. The interval 2095–2537 (ELSFSQQRLW…LGSTEEELLL (443 aa)) is condensation 2. An adenylation 3 region spans residues 2557–2956 (FEDQVERSPD…GRNDDQVKIR (400 aa)). The Carrier 3 domain occupies 3058–3132 (EPQGEVEMKL…VLAASITRGC (75 aa)). Serine 3093 carries the O-(pantetheine 4'-phosphoryl)serine modification. The segment at 3182–3616 (QDIYSLSPLQ…VIPAEEHDLL (435 aa)) is dual epimerase/condensation (E/C) domain 2. The adenylation 4 stretch occupies residues 3637–4038 (FENQVRERPE…GRNDEQVKIR (402 aa)). Residues 4140–4214 (APRGDIEISL…VLAASLNTHQ (75 aa)) enclose the Carrier 4 domain. Serine 4175 is subject to O-(pantetheine 4'-phosphoryl)serine. The tract at residues 4260 to 4695 (VQDVYSLSPL…VIPAEEHDLL (436 aa)) is dual epimerase/condensation (E/C) domain 3. The segment at 4716–5117 (FENQVRERPE…GRNDEQVKIR (402 aa)) is adenylation 5. Positions 5219–5294 (LPSGDVEIGL…ELAQKLVQGG (76 aa)) constitute a Carrier 5 domain. An O-(pantetheine 4'-phosphoryl)serine modification is found at serine 5254. A thioesterase (TE) domain region spans residues 5315–5523 (PLFCIHSGLG…VECTHIEMDK (209 aa)).

This sequence belongs to the NRP synthetase family.

Functionally, nonribosomal peptide synthetase that catalyzes the biosynthesis of the hydrophobic cyclopentapeptides malpibaldins, natural products that show biosurfactant activities. Module 3 shows promiscuous adenylation (accepting either Trp, Phe or Tyr) leading to the parallel production of multiple products from one NRPS assembly line, including malpibaldin A corresponding to cyclo(-L-Leu-D-Leu-D-Phe-L-Leu-D-Val-), malpibaldin B corresponding to cyclo(-L-Leu-D-Leu-D-Tyr-L-Leu-D-Val-) and malpibaldin C corresponding to cyclo(-Leu-Leu-Trp-Leu-Val-). The chain is Malpibaldin synthetase from Mortierella alpina (Oleaginous fungus).